The primary structure comprises 488 residues: Multidrug resistance outer membrane protein MdtP (488 aa).

The signal sequence occupies residues 1–23 (MINRQLSRLLLCSILGSTTLISG). Residue C24 is the site of N-palmitoyl cysteine attachment. The S-diacylglycerol cysteine moiety is linked to residue C24.

The protein belongs to the outer membrane factor (OMF) (TC 1.B.17) family. Could be part of a tripartite efflux system composed of MdtN, MdtO and MdtP.

Its subcellular location is the cell outer membrane. In terms of biological role, could be involved in resistance to puromycin, acriflavine and tetraphenylarsonium chloride. The chain is Multidrug resistance outer membrane protein MdtP (mdtP) from Escherichia coli (strain K12).